Consider the following 323-residue polypeptide: CD-NTase-associated protein 12 (323 aa).

The TIR domain occupies 4-120 (RIFIGSSSEQ…LDGITVAKFT (117 aa)). Glu-84 is a catalytic residue. Residues 154 to 323 (STALAIGYYN…YVNVLTNVKL (170 aa)) form an STING domain region. 3',3'-c-di-GMP is bound by residues Ser-164, Phe-165, Arg-234, Pro-237, Asp-259, Ser-262, and Thr-263.

This sequence in the C-terminal section; belongs to the bacterial STING family. As to quaternary structure, forms homodimers which subsequently form filaments. In vitro in the presence of c-di-GMP forms filaments up to 300 nm in length with an ordered array of parallel-stacked subunits, where the TIR domains form one face of the filament and the STING domains form the other face. Antiparallel double-filament structures are also seen. 3'3'-cGAMP weakly induces filament formation, while 2'3'-cGAMP does not.

It catalyses the reaction NAD(+) + H2O = ADP-D-ribose + nicotinamide + H(+). With respect to regulation, NAD(+) hydrolase activity is strongly stimulated by c-di-GMP, weakly by 3'3'-cGAMP, very weakly by c-di-AMP and not at all by 2'3'-cGAMP. Self-association of TIR domains is required for NADase activity. In terms of biological role, effector protein of a CBASS antiviral system with NAD(+) hydrolase activity. CBASS (cyclic oligonucleotide-based antiphage signaling system) provides immunity against bacteriophage. The CD-NTase protein synthesizes cyclic nucleotides in response to infection; these serve as specific second messenger signals. The signals activate a diverse range of effectors, leading to bacterial cell death and thus abortive phage infection. A type I-D(GG) CBASS system. Its function is as follows. Upon activation by 3'3'-c-di-GMP forms filaments which hydrolyze NAD(+); filament formation is required for enzyme activation. Induction in an E.coli strain that synthesizes c-di-GMP leads to significant growth inhibition. Binds c-di-GMP and 3'3'-cGAMP (3'3'-cyclic GMP-AMP), but not c-di-AMP, 2'3'-cGAMP or cUMP-AMP. The sequence is that of CD-NTase-associated protein 12 from Sphingobacterium faecium (strain DSM 11690 / JCM 21820 / NBRC 15299 / NCIMB 13408 / KS 0470).